The chain runs to 43 residues: Potassium channel toxin gamma-KTx 4.2 (43 aa).

Intrachain disulfides connect Cys-5/Cys-23, Cys-11/Cys-34, Cys-20/Cys-39, and Cys-24/Cys-41.

It belongs to the ergtoxin family. Gamma-KTx 4 subfamily. As to expression, expressed by the venom gland.

The protein localises to the secreted. In terms of biological role, reversibly blocks Kv11/ERG potassium channels. This is Potassium channel toxin gamma-KTx 4.2 from Centruroides noxius (Mexican scorpion).